The chain runs to 158 residues: NADH-quinone oxidoreductase subunit B (158 aa).

[4Fe-4S] cluster-binding residues include cysteine 36, cysteine 37, cysteine 101, and cysteine 131.

Belongs to the complex I 20 kDa subunit family. As to quaternary structure, NDH-1 is composed of 14 different subunits. Subunits NuoB, C, D, E, F, and G constitute the peripheral sector of the complex. Requires [4Fe-4S] cluster as cofactor.

The protein resides in the cell inner membrane. The catalysed reaction is a quinone + NADH + 5 H(+)(in) = a quinol + NAD(+) + 4 H(+)(out). NDH-1 shuttles electrons from NADH, via FMN and iron-sulfur (Fe-S) centers, to quinones in the respiratory chain. The immediate electron acceptor for the enzyme in this species is believed to be ubiquinone. Couples the redox reaction to proton translocation (for every two electrons transferred, four hydrogen ions are translocated across the cytoplasmic membrane), and thus conserves the redox energy in a proton gradient. The sequence is that of NADH-quinone oxidoreductase subunit B from Francisella philomiragia subsp. philomiragia (strain ATCC 25017 / CCUG 19701 / FSC 153 / O#319-036).